The following is a 152-amino-acid chain: Histone H2B.1 (152 aa).

A compositionally biased stretch (basic and acidic residues) spans methionine 1–proline 28. Residues methionine 1–lysine 60 are disordered. Residues lysine 7 and lysine 37 each carry the N6-acetyllysine modification. A Glycyl lysine isopeptide (Lys-Gly) (interchain with G-Cter in ubiquitin) cross-link involves residue lysine 148.

It belongs to the histone H2B family. The nucleosome is a histone octamer containing two molecules each of H2A, H2B, H3 and H4 assembled in one H3-H4 heterotetramer and two H2A-H2B heterodimers. The octamer wraps approximately 147 bp of DNA. Post-translationally, can be acetylated to form H2BK6ac and H2BK33ac. In terms of processing, monoubiquitinated to form H2BK143ub1; may give a specific tag for epigenetic transcriptional activation.

It is found in the nucleus. It localises to the chromosome. Its function is as follows. Core component of nucleosome. Nucleosomes wrap and compact DNA into chromatin, limiting DNA accessibility to the cellular machineries which require DNA as a template. Histones thereby play a central role in transcription regulation, DNA repair, DNA replication and chromosomal stability. DNA accessibility is regulated via a complex set of post-translational modifications of histones, also called histone code, and nucleosome remodeling. The sequence is that of Histone H2B.1 from Triticum aestivum (Wheat).